The following is a 230-amino-acid chain: Cytochrome c oxidase subunit 2 (230 aa).

The Mitochondrial intermembrane segment spans residues 1 to 14; the sequence is MAHPSQLGFQDAAS. Residues 15–45 form a helical membrane-spanning segment; sequence PVMEELLHFHDHALMIVLLISTLVLYIIVAM. The Mitochondrial matrix portion of the chain corresponds to 46-59; it reads VSTKLTNMYILDSQ. Residues 60-87 traverse the membrane as a helical segment; that stretch reads EIEIVWTVLPAVILILIALPSLRILYLM. Over 88-230 the chain is Mitochondrial intermembrane; that stretch reads DEINDPHLTI…KWSTMMLEDA (143 aa). Cu cation is bound by residues His-161, Cys-196, Glu-198, Cys-200, His-204, and Met-207. Mg(2+) is bound at residue Glu-198.

Belongs to the cytochrome c oxidase subunit 2 family. In terms of assembly, component of the cytochrome c oxidase (complex IV, CIV), a multisubunit enzyme composed of 14 subunits. The complex is composed of a catalytic core of 3 subunits MT-CO1, MT-CO2 and MT-CO3, encoded in the mitochondrial DNA, and 11 supernumerary subunits COX4I, COX5A, COX5B, COX6A, COX6B, COX6C, COX7A, COX7B, COX7C, COX8 and NDUFA4, which are encoded in the nuclear genome. The complex exists as a monomer or a dimer and forms supercomplexes (SCs) in the inner mitochondrial membrane with NADH-ubiquinone oxidoreductase (complex I, CI) and ubiquinol-cytochrome c oxidoreductase (cytochrome b-c1 complex, complex III, CIII), resulting in different assemblies (supercomplex SCI(1)III(2)IV(1) and megacomplex MCI(2)III(2)IV(2)). Found in a complex with TMEM177, COA6, COX18, COX20, SCO1 and SCO2. Interacts with TMEM177 in a COX20-dependent manner. Interacts with COX20. Interacts with COX16. Requires Cu cation as cofactor.

It localises to the mitochondrion inner membrane. It catalyses the reaction 4 Fe(II)-[cytochrome c] + O2 + 8 H(+)(in) = 4 Fe(III)-[cytochrome c] + 2 H2O + 4 H(+)(out). Its function is as follows. Component of the cytochrome c oxidase, the last enzyme in the mitochondrial electron transport chain which drives oxidative phosphorylation. The respiratory chain contains 3 multisubunit complexes succinate dehydrogenase (complex II, CII), ubiquinol-cytochrome c oxidoreductase (cytochrome b-c1 complex, complex III, CIII) and cytochrome c oxidase (complex IV, CIV), that cooperate to transfer electrons derived from NADH and succinate to molecular oxygen, creating an electrochemical gradient over the inner membrane that drives transmembrane transport and the ATP synthase. Cytochrome c oxidase is the component of the respiratory chain that catalyzes the reduction of oxygen to water. Electrons originating from reduced cytochrome c in the intermembrane space (IMS) are transferred via the dinuclear copper A center (CU(A)) of subunit 2 and heme A of subunit 1 to the active site in subunit 1, a binuclear center (BNC) formed by heme A3 and copper B (CU(B)). The BNC reduces molecular oxygen to 2 water molecules using 4 electrons from cytochrome c in the IMS and 4 protons from the mitochondrial matrix. This Oncorhynchus mykiss (Rainbow trout) protein is Cytochrome c oxidase subunit 2 (mt-co2).